Here is a 230-residue protein sequence, read N- to C-terminus: MTSKIIVALDYEKEAEALALVDQIDPSLCRLKVGKEMFTTLGINFVKQLHQRNFDVFLDLKYHDIPNTVARAVRSAADLGVWMVDLHASGGLRMMEEAKKILEPYGKDAPLLIAVTVLTSMEDLDLLQIGINASPMEQVLRLAHLTQRAGLDGVVCSPQEVEILRNTCGKEFKLVTPGIRPIGTDFGDQRRVMTPTAAIRAGSDYLVIGRPITQADNPAEVLRSINVSIG.

Residues D10, K32, 59–68 (DLKYHDIPNT), T119, R180, Q189, G209, and R210 contribute to the substrate site. Residue K61 is the Proton donor of the active site.

It belongs to the OMP decarboxylase family. Type 1 subfamily. As to quaternary structure, homodimer.

The enzyme catalyses orotidine 5'-phosphate + H(+) = UMP + CO2. It participates in pyrimidine metabolism; UMP biosynthesis via de novo pathway; UMP from orotate: step 2/2. Its function is as follows. Catalyzes the decarboxylation of orotidine 5'-monophosphate (OMP) to uridine 5'-monophosphate (UMP). The sequence is that of Orotidine 5'-phosphate decarboxylase from Haemophilus influenzae (strain 86-028NP).